We begin with the raw amino-acid sequence, 106 residues long: uncharacterized protein (106 aa).

The interval 1–46 (MPQGGTPCRRARRAVRPERPTSPEGVFCVGGGAPGGPPDTTNTVSA) is disordered.

This is an uncharacterized protein from Gracula (BFDV).